Consider the following 163-residue polypeptide: Protein NAG1 (163 aa).

The chain crosses the membrane as a helical span at residues 76 to 96 (ACFSVRIVLPLSLTISISALM).

It localises to the membrane. Functionally, involved in yeast cell wall biogenesis. The sequence is that of Protein NAG1 (NAG1) from Saccharomyces cerevisiae (strain ATCC 204508 / S288c) (Baker's yeast).